The sequence spans 470 residues: 5-hydroxytryptamine receptor 2A (470 aa).

At Met1–Leu80 the chain is on the extracellular side. N-linked (GlcNAc...) asparagine glycosylation is present at Asn38. The helical transmembrane segment at Thr81–Met97 threads the bilayer. The Cytoplasmic segment spans residues Ala98 to Tyr111. The helical transmembrane segment at Phe112–Tyr137 threads the bilayer. Residues Gly138–Lys146 lie on the Extracellular side of the membrane. The chain crosses the membrane as a helical span at residues Leu147–Leu171. Cys148 and Cys227 are disulfide-bonded. Asp155 is a binding site for serotonin. Residues Asp172–Tyr174 carry the DRY motif; important for ligand-induced conformation changes motif. Topologically, residues Asp172–Lys191 are cytoplasmic. A helical transmembrane segment spans residues Ala192 to Leu215. Residues Gln216–Glu232 are Extracellular-facing. The helical transmembrane segment at Asn233–Ile258 threads the bilayer. Over Lys259–Cys321 the chain is Cytoplasmic. Phosphoserine is present on Ser280. A helical transmembrane segment spans residues Lys322 to Ile347. Asn342 is a binding site for serotonin. Cys348 and Cys352 are disulfide-bonded. Residues Cys348–Asp355 lie on the Extracellular side of the membrane. A helical transmembrane segment spans residues Val356–Leu381. The NPxxY motif; important for ligand-induced conformation changes and signaling motif lies at Asn375–Tyr379. Residues Phe382 to Val470 are Cytoplasmic-facing. The interval Gln424 to Val470 is disordered. A compositionally biased stretch (polar residues) spans Asp458–Val470. The PDZ-binding motif lies at Ser468–Val470.

Belongs to the G-protein coupled receptor 1 family. Interacts (via C-terminus) with MPDZ and PATJ. May interact (via C-terminus) with MPP3, PRDX6, DLG4, DLG1, CASK, APBA1 and MAGI2. Interacts with GRM2 and DRD2; this may affect signaling.

The protein resides in the cell membrane. The protein localises to the cell projection. It is found in the dendrite. Its subcellular location is the axon. It localises to the cytoplasmic vesicle. The protein resides in the membrane. The protein localises to the caveola. It is found in the presynapse. With respect to regulation, G-protein coupled receptor activity is regulated by lipids: oleamide increases HTR2A-mediated activity. Its function is as follows. G-protein coupled receptor for 5-hydroxytryptamine (serotonin). Also functions as a receptor for various drugs and psychoactive substances, including mescaline, psilocybin, 1-(2,5-dimethoxy-4-iodophenyl)-2-aminopropane (DOI) and lysergic acid diethylamide (LSD). Ligand binding causes a conformation change that triggers signaling via guanine nucleotide-binding proteins (G proteins) and modulates the activity of downstream effectors. HTR2A is coupled to G(q)/G(11) G alpha proteins and activates phospholipase C-beta, releasing diacylglycerol (DAG) and inositol 1,4,5-trisphosphate (IP3) second messengers that modulate the activity of phosphatidylinositol 3-kinase and promote the release of Ca(2+) ions from intracellular stores, respectively. Beta-arrestin family members inhibit signaling via G proteins and mediate activation of alternative signaling pathways. Affects neural activity, perception, cognition and mood. Plays a role in the regulation of behavior, including responses to anxiogenic situations and psychoactive substances. Plays a role in intestinal smooth muscle contraction, and may play a role in arterial vasoconstriction. The protein is 5-hydroxytryptamine receptor 2A (HTR2A) of Bos taurus (Bovine).